The sequence spans 115 residues: Large ribosomal subunit protein uL22 (115 aa).

Belongs to the universal ribosomal protein uL22 family. As to quaternary structure, part of the 50S ribosomal subunit.

This protein binds specifically to 23S rRNA; its binding is stimulated by other ribosomal proteins, e.g. L4, L17, and L20. It is important during the early stages of 50S assembly. It makes multiple contacts with different domains of the 23S rRNA in the assembled 50S subunit and ribosome. In terms of biological role, the globular domain of the protein is located near the polypeptide exit tunnel on the outside of the subunit, while an extended beta-hairpin is found that lines the wall of the exit tunnel in the center of the 70S ribosome. This chain is Large ribosomal subunit protein uL22, found in Streptomyces avermitilis (strain ATCC 31267 / DSM 46492 / JCM 5070 / NBRC 14893 / NCIMB 12804 / NRRL 8165 / MA-4680).